The chain runs to 689 residues: Glycine--tRNA ligase beta subunit (689 aa).

It belongs to the class-II aminoacyl-tRNA synthetase family. Tetramer of two alpha and two beta subunits.

Its subcellular location is the cytoplasm. It catalyses the reaction tRNA(Gly) + glycine + ATP = glycyl-tRNA(Gly) + AMP + diphosphate. The chain is Glycine--tRNA ligase beta subunit from Salmonella heidelberg (strain SL476).